The following is a 296-amino-acid chain: 4-hydroxybenzoate octaprenyltransferase (296 aa).

Helical transmembrane passes span 28–48 (PIGI…AGLG), 52–72 (LANV…GCCI), 102–122 (ALAL…CTNS), 145–167 (TYYP…FTAA), 174–196 (SAWL…YAMV), 219–239 (MIIL…GSRF), 241–261 (LGGW…WEYW), and 275–295 (FLHN…DYAL).

The protein belongs to the UbiA prenyltransferase family. Mg(2+) serves as cofactor.

The protein resides in the cell inner membrane. The catalysed reaction is all-trans-octaprenyl diphosphate + 4-hydroxybenzoate = 4-hydroxy-3-(all-trans-octaprenyl)benzoate + diphosphate. It functions in the pathway cofactor biosynthesis; ubiquinone biosynthesis. Its function is as follows. Catalyzes the prenylation of para-hydroxybenzoate (PHB) with an all-trans polyprenyl group. Mediates the second step in the final reaction sequence of ubiquinone-8 (UQ-8) biosynthesis, which is the condensation of the polyisoprenoid side chain with PHB, generating the first membrane-bound Q intermediate 3-octaprenyl-4-hydroxybenzoate. The chain is 4-hydroxybenzoate octaprenyltransferase from Pseudomonas putida (strain W619).